Reading from the N-terminus, the 402-residue chain is MRSRQLHNVSEDRETLSRRNKRSKTSLNGHIPIDLLIEIFLKLPVKSIATCRSVSKFWTYVLGRQDFTELFLTKSSSRPQLLFACANDNGYFFFSSNQPQNLDENSSPIAAYPLTHVPKSRDLGPPINGLVSLRGERILKGRIRPVDVSIIYNPSTGESLTLPKTNMTRKKIYTVTSFLGYDPIEKQYKVLSMNMSYEKHPKCEGYQVLTLGTGKLSWRMIKCCLNYQHPLKNSEICINGVLYYLAMVNGSSWPTRAVVCFDIRSEMFNFMEVYRELSYTTTLINYNNGKLGMLMGQEAHKTISGICRSFELWVLEDTVKHEWSKHVYLLPPLWKDAVANTRLYFAGMIGTSEIVLFRPDEPLCVFYYNIDRNTIKRVGIRGLEAFKYFRIFLNHVENVKLF.

Positions 1–23 (MRSRQLHNVSEDRETLSRRNKRS) are disordered. The region spanning 26–73 (SLNGHIPIDLLIEIFLKLPVKSIATCRSVSKFWTYVLGRQDFTELFLT) is the F-box domain.

The sequence is that of Putative F-box protein At3g23960 from Arabidopsis thaliana (Mouse-ear cress).